The sequence spans 374 residues: Phosphate-binding protein PstS 1 (374 aa).

The N-terminal stretch at 1 to 23 (MKIRLHTLLAVLTAAPLLLAAAG) is a signal peptide. Residue C24 is the site of N-palmitoyl cysteine attachment. The S-diacylglycerol cysteine moiety is linked to residue C24. The tract at residues 25–48 (GSKPPSGSPETGAGAGTVATTPAS) is disordered. Phosphate contacts are provided by residues 58-60 (STL), S88, D106, and 189-191 (SGD).

The protein belongs to the PstS family. The complex is composed of two ATP-binding proteins (PstB), two transmembrane proteins (PstC and PstA) and a solute-binding protein (PstS).

Its subcellular location is the cell membrane. Part of the ABC transporter complex PstSACB involved in phosphate import. This Mycobacterium tuberculosis (strain CDC 1551 / Oshkosh) protein is Phosphate-binding protein PstS 1 (pstS1).